The sequence spans 103 residues: Large ribosomal subunit protein bL21 (103 aa).

This sequence belongs to the bacterial ribosomal protein bL21 family. In terms of assembly, part of the 50S ribosomal subunit. Contacts protein L20.

In terms of biological role, this protein binds to 23S rRNA in the presence of protein L20. The polypeptide is Large ribosomal subunit protein bL21 (Mycobacterium tuberculosis (strain ATCC 25618 / H37Rv)).